The primary structure comprises 200 residues: dTDP-4-dehydrorhamnose 3,5-epimerase (200 aa).

Substrate is bound by residues arginine 21, glutamate 26, 45 to 47, and arginine 57; that span reads QVN. Residue histidine 60 is the Proton acceptor of the active site. Substrate is bound by residues lysine 70 and histidine 116. Catalysis depends on tyrosine 129, which acts as the Proton donor. Substrate-binding residues include glutamate 140 and lysine 165.

This sequence belongs to the dTDP-4-dehydrorhamnose 3,5-epimerase family.

The enzyme catalyses dTDP-4-dehydro-6-deoxy-alpha-D-glucose = dTDP-4-dehydro-beta-L-rhamnose. Its pathway is carbohydrate biosynthesis; dTDP-L-rhamnose biosynthesis. The protein operates within antibiotic biosynthesis; streptomycin biosynthesis. Involved in the biosynthesis of the dihydrostreptose moiety of streptomycin. Catalyzes the epimerization of the C3' and C5'positions of dTDP-6-deoxy-D-xylo-4-hexulose, forming dTDP-6-deoxy-L-lyxo-4-hexulose. This is dTDP-4-dehydrorhamnose 3,5-epimerase from Streptomyces griseus.